The primary structure comprises 616 residues: Dihydroxy-acid dehydratase (616 aa).

Asp-81 serves as a coordination point for Mg(2+). Residue Cys-122 coordinates [2Fe-2S] cluster. Mg(2+) contacts are provided by Asp-123 and Lys-124. Lys-124 is subject to N6-carboxylysine. Cys-195 serves as a coordination point for [2Fe-2S] cluster. Glu-491 is a Mg(2+) binding site. The active-site Proton acceptor is the Ser-517.

It belongs to the IlvD/Edd family. Homodimer. [2Fe-2S] cluster is required as a cofactor. Mg(2+) serves as cofactor.

It carries out the reaction (2R)-2,3-dihydroxy-3-methylbutanoate = 3-methyl-2-oxobutanoate + H2O. The catalysed reaction is (2R,3R)-2,3-dihydroxy-3-methylpentanoate = (S)-3-methyl-2-oxopentanoate + H2O. The protein operates within amino-acid biosynthesis; L-isoleucine biosynthesis; L-isoleucine from 2-oxobutanoate: step 3/4. Its pathway is amino-acid biosynthesis; L-valine biosynthesis; L-valine from pyruvate: step 3/4. In terms of biological role, functions in the biosynthesis of branched-chain amino acids. Catalyzes the dehydration of (2R,3R)-2,3-dihydroxy-3-methylpentanoate (2,3-dihydroxy-3-methylvalerate) into 2-oxo-3-methylpentanoate (2-oxo-3-methylvalerate) and of (2R)-2,3-dihydroxy-3-methylbutanoate (2,3-dihydroxyisovalerate) into 2-oxo-3-methylbutanoate (2-oxoisovalerate), the penultimate precursor to L-isoleucine and L-valine, respectively. This is Dihydroxy-acid dehydratase from Shigella flexneri.